Reading from the N-terminus, the 377-residue chain is 6-oxocyclohex-1-ene-1-carbonyl-CoA hydrolase (377 aa).

This sequence belongs to the enoyl-CoA hydratase/isomerase family. In terms of assembly, homotetramer.

The catalysed reaction is 6-oxocyclohex-1-ene-1-carbonyl-CoA + 2 H2O = 3-hydroxy-6-carboxyhexanoyl-CoA + H(+). Its pathway is aromatic compound metabolism; benzoyl-CoA degradation. In terms of biological role, involved in the central benzoyl-CoA catabolism. Catalyzes the addition of one molecule of water to the double bond and the hydrolytic cleavage of C-C bond in the alicyclic ring, 6-oxocyclohex-1-ene-1-carbonyl-CoA (6-OCH-CoA) to yield 3-hydroxypimelyl-CoA. The polypeptide is 6-oxocyclohex-1-ene-1-carbonyl-CoA hydrolase (oah) (Thauera aromatica).